The chain runs to 67 residues: Inosine/xanthosine triphosphatase (67 aa).

This sequence belongs to the YjjX NTPase family. In terms of assembly, homodimer. Requires Mg(2+) as cofactor. Mn(2+) is required as a cofactor.

The catalysed reaction is XTP + H2O = XDP + phosphate + H(+). The enzyme catalyses ITP + H2O = IDP + phosphate + H(+). In terms of biological role, phosphatase that hydrolyzes non-canonical purine nucleotides such as XTP and ITP to their respective diphosphate derivatives. Probably excludes non-canonical purines from DNA/RNA precursor pool, thus preventing their incorporation into DNA/RNA and avoiding chromosomal lesions. This Enterobacter cloacae protein is Inosine/xanthosine triphosphatase.